The chain runs to 322 residues: Mycothiol acetyltransferase (322 aa).

2 N-acetyltransferase domains span residues 5–150 (SWLR…DPDD) and 160–322 (VTIR…PARG). Glu36 provides a ligand contact to 1D-myo-inositol 2-(L-cysteinylamino)-2-deoxy-alpha-D-glucopyranoside. Acetyl-CoA contacts are provided by residues 79-81 (LVV) and 87-92 (RRGVGT). Positions 187, 226, and 252 each coordinate 1D-myo-inositol 2-(L-cysteinylamino)-2-deoxy-alpha-D-glucopyranoside. Residue 256–258 (VGV) participates in acetyl-CoA binding. Tyr290 contributes to the 1D-myo-inositol 2-(L-cysteinylamino)-2-deoxy-alpha-D-glucopyranoside binding site. An acetyl-CoA-binding site is contributed by 295-300 (NARAVR).

It belongs to the acetyltransferase family. MshD subfamily. As to quaternary structure, monomer.

The catalysed reaction is 1D-myo-inositol 2-(L-cysteinylamino)-2-deoxy-alpha-D-glucopyranoside + acetyl-CoA = mycothiol + CoA + H(+). Catalyzes the transfer of acetyl from acetyl-CoA to desacetylmycothiol (Cys-GlcN-Ins) to form mycothiol. The polypeptide is Mycothiol acetyltransferase (Parafrankia sp. (strain EAN1pec)).